The primary structure comprises 185 residues: Elongation factor P 1 (185 aa).

The protein belongs to the elongation factor P family.

The protein localises to the cytoplasm. It functions in the pathway protein biosynthesis; polypeptide chain elongation. In terms of biological role, involved in peptide bond synthesis. Stimulates efficient translation and peptide-bond synthesis on native or reconstituted 70S ribosomes in vitro. Probably functions indirectly by altering the affinity of the ribosome for aminoacyl-tRNA, thus increasing their reactivity as acceptors for peptidyl transferase. The protein is Elongation factor P 1 (efp1) of Chlamydia caviae (strain ATCC VR-813 / DSM 19441 / 03DC25 / GPIC) (Chlamydophila caviae).